A 198-amino-acid chain; its full sequence is MQPTPSQHPVGAQPLIARPATGIIDPNTGRPVGADDPFFLNVNRELSDKGFFVAATDDLITWARTGSLMWMTFGLACCAVEMMQLSMPRYDAERFGFAPRASPRQSDVMIVAGTLTNKMAPALRKVYDQMPEPRYVISMGSCANGGGYYHYSYSVVRGCDRIVPIDIYVPGCPPTAEALLYGVMLLQKKIRRTGTIER.

The [4Fe-4S] cluster site is built by Cys-77, Cys-78, Cys-142, and Cys-172.

The protein belongs to the complex I 20 kDa subunit family. As to quaternary structure, NDH-1 is composed of 14 different subunits. Subunits NuoB, C, D, E, F, and G constitute the peripheral sector of the complex. Requires [4Fe-4S] cluster as cofactor.

Its subcellular location is the cell inner membrane. The enzyme catalyses a quinone + NADH + 5 H(+)(in) = a quinol + NAD(+) + 4 H(+)(out). In terms of biological role, NDH-1 shuttles electrons from NADH, via FMN and iron-sulfur (Fe-S) centers, to quinones in the respiratory chain. The immediate electron acceptor for the enzyme in this species is believed to be ubiquinone. Couples the redox reaction to proton translocation (for every two electrons transferred, four hydrogen ions are translocated across the cytoplasmic membrane), and thus conserves the redox energy in a proton gradient. The protein is NADH-quinone oxidoreductase subunit B 1 of Rhodopseudomonas palustris (strain ATCC BAA-98 / CGA009).